Here is a 575-residue protein sequence, read N- to C-terminus: 2-succinyl-5-enolpyruvyl-6-hydroxy-3-cyclohexene-1-carboxylate synthase (575 aa).

This sequence belongs to the TPP enzyme family. MenD subfamily. In terms of assembly, homodimer. Mg(2+) serves as cofactor. Requires Mn(2+) as cofactor. The cofactor is thiamine diphosphate.

The enzyme catalyses isochorismate + 2-oxoglutarate + H(+) = 5-enolpyruvoyl-6-hydroxy-2-succinyl-cyclohex-3-ene-1-carboxylate + CO2. Its pathway is quinol/quinone metabolism; 1,4-dihydroxy-2-naphthoate biosynthesis; 1,4-dihydroxy-2-naphthoate from chorismate: step 2/7. The protein operates within quinol/quinone metabolism; menaquinone biosynthesis. In terms of biological role, catalyzes the thiamine diphosphate-dependent decarboxylation of 2-oxoglutarate and the subsequent addition of the resulting succinic semialdehyde-thiamine pyrophosphate anion to isochorismate to yield 2-succinyl-5-enolpyruvyl-6-hydroxy-3-cyclohexene-1-carboxylate (SEPHCHC). The protein is 2-succinyl-5-enolpyruvyl-6-hydroxy-3-cyclohexene-1-carboxylate synthase of Syntrophus aciditrophicus (strain SB).